Here is a 138-residue protein sequence, read N- to C-terminus: Membrane glycoprotein UL139 (138 aa).

The N-terminal stretch at Met-1–Ser-15 is a signal peptide. Residues Thr-17–Thr-37 are disordered. The chain crosses the membrane as a helical span at residues Gly-64–Val-84. The segment covering Ser-113–Gln-129 has biased composition (polar residues). Residues Ser-113–Arg-138 form a disordered region.

It localises to the host membrane. The polypeptide is Membrane glycoprotein UL139 (UL139) (Homo sapiens (Human)).